We begin with the raw amino-acid sequence, 526 residues long: Importin subunit alpha-1a (526 aa).

One can recognise an IBB domain in the interval 1–58; the sequence is MSLRPSERVEVRRNRYKVAVDAEEGRRRREDNMVEIRKSRREESLLKKRREGLQAQAP. ARM repeat units follow at residues 105 to 145, 148 to 187, 190 to 230, 232 to 271, 274 to 313, 316 to 356, 359 to 398, and 402 to 441; these read SPPI…NIAS, SENT…NVAG, PKCR…NFCR, KPQP…YLSD, NDKI…NIVT, DAQT…NITA, KDQI…NATS, and HDQI…NILK.

The protein belongs to the importin alpha family. Forms a complex with importin subunit beta-1. The whole complex, most stable and composed of importin alpha, importin beta and NLS substrate, is referred to as PTAC or pore targeting complex. Interacts with mungbean yellow mosaic virus capsid protein. Highly expressed in callus, followed by root and etiolated leaf. Low expression in green leaf.

Its subcellular location is the cytoplasm. The protein localises to the perinuclear region. In terms of biological role, functions in nuclear protein import. Binds specifically and directly to substrates containing either a simple or bipartite NLS motif. Promotes docking of import substrates to the nuclear envelope. In Oryza sativa subsp. japonica (Rice), this protein is Importin subunit alpha-1a.